A 164-amino-acid polypeptide reads, in one-letter code: Transcriptional regulator MraZ (164 aa).

SpoVT-AbrB domains follow at residues 7-57 and 86-129; these read THQN…TVGA and AYPL…NPEA. Residues 133-164 are disordered; sequence RRQAARSRARTLATSRRPASAPAAGNTAGAAE. Low complexity predominate over residues 142-164; that stretch reads RTLATSRRPASAPAAGNTAGAAE.

This sequence belongs to the MraZ family. Forms oligomers.

It is found in the cytoplasm. The protein localises to the nucleoid. In Gluconobacter oxydans (strain 621H) (Gluconobacter suboxydans), this protein is Transcriptional regulator MraZ.